Here is a 116-residue protein sequence, read N- to C-terminus: Ribosome-binding factor A (116 aa).

Belongs to the RbfA family. As to quaternary structure, monomer. Binds 30S ribosomal subunits, but not 50S ribosomal subunits or 70S ribosomes.

It localises to the cytoplasm. In terms of biological role, one of several proteins that assist in the late maturation steps of the functional core of the 30S ribosomal subunit. Associates with free 30S ribosomal subunits (but not with 30S subunits that are part of 70S ribosomes or polysomes). Required for efficient processing of 16S rRNA. May interact with the 5'-terminal helix region of 16S rRNA. The chain is Ribosome-binding factor A from Ureaplasma urealyticum serovar 10 (strain ATCC 33699 / Western).